A 371-amino-acid polypeptide reads, in one-letter code: uncharacterized protein (371 aa).

33–40 (GPLNSGKT) serves as a coordination point for ATP.

This sequence belongs to the archaeal ATPase family.

This is an uncharacterized protein from Methanocaldococcus jannaschii (strain ATCC 43067 / DSM 2661 / JAL-1 / JCM 10045 / NBRC 100440) (Methanococcus jannaschii).